A 523-amino-acid chain; its full sequence is 2-isopropylmalate synthase (523 aa).

The Pyruvate carboxyltransferase domain maps to 5 to 267; it reads VIIFDTTLRD…HTAINHQEIW (263 aa). 4 residues coordinate Mn(2+): D14, H202, H204, and N238. The segment at 392–523 is regulatory domain; it reads RLDYFSVQSG…QHNENNKETV (132 aa).

This sequence belongs to the alpha-IPM synthase/homocitrate synthase family. LeuA type 1 subfamily. As to quaternary structure, homodimer. Mn(2+) is required as a cofactor.

It is found in the cytoplasm. The catalysed reaction is 3-methyl-2-oxobutanoate + acetyl-CoA + H2O = (2S)-2-isopropylmalate + CoA + H(+). Its pathway is amino-acid biosynthesis; L-leucine biosynthesis; L-leucine from 3-methyl-2-oxobutanoate: step 1/4. Functionally, catalyzes the condensation of the acetyl group of acetyl-CoA with 3-methyl-2-oxobutanoate (2-ketoisovalerate) to form 3-carboxy-3-hydroxy-4-methylpentanoate (2-isopropylmalate). The protein is 2-isopropylmalate synthase of Shigella flexneri serotype 5b (strain 8401).